A 465-amino-acid chain; its full sequence is Nuclear pore complex protein NUP50B (465 aa).

Disordered stretches follow at residues 1-44 (MGDS…TFNT) and 59-244 (RRTD…FHQH). G2 carries the N-acetylglycine modification. The span at 26 to 35 (GLDDDDEDTS) shows a compositional bias: acidic residues. Residues 81-97 (PFTAPAPSTAAAETTKP) are compositionally biased toward low complexity. Composition is skewed to basic and acidic residues over residues 105–127 (TLAD…KSDA), 141–157 (ISAK…KEMS), and 216–233 (TEKE…EKNG). The residue at position 125 (S125) is a Phosphoserine. A run of 3 repeats spans residues 266–267 (FG), 286–287 (FG), and 297–298 (FG). Positions 266–298 (FGLVPQEGSTGSGSEQSSFSFGQANNGNSSLFG) are 3 X 2 AA repeats of F-G. Disordered regions lie at residues 308–330 (KSTE…GEEN) and 439–465 (HKDS…AEDA). T455 carries the post-translational modification Phosphothreonine. The segment covering 456–465 (PENSPSAEDA) has biased composition (polar residues). At S459 the chain carries Phosphoserine.

Part of the nuclear pore complex (NPC). The NPC has an eight-fold symmetrical structure comprising a central transport channel and two rings, the cytoplasmic and nuclear rings, to which eight filaments are attached. The cytoplasmic filaments have loose ends, while the nuclear filaments are joined in a distal ring, forming a nuclear basket. NPCs are highly dynamic in configuration and composition, and can be devided in 3 subcomplexes, the NUP62 subcomplex, the NUP107-160 subcomplex and the NUP93 subcomplex, containing approximately 30 different nucleoporin proteins.

It localises to the nucleus. The protein resides in the nucleoplasm. The protein localises to the nuclear pore complex. Its function is as follows. Probably involved in nucleocytoplasmic transport via its interactions with importins and Ran, rather than by forming part of the nuclear pore complex (NPC) scaffolding. The protein is Nuclear pore complex protein NUP50B of Arabidopsis thaliana (Mouse-ear cress).